A 272-amino-acid chain; its full sequence is Replication-associated protein A (272 aa).

Residues 11 to 114 (SHRNANTFLT…PLAVFERGTF (104 aa)) enclose the CRESS-DNA virus Rep endonuclease domain. The RCR-1 motif lies at 18-21 (FLTY). 3 residues coordinate a divalent metal cation: Glu52, His60, and His62. The RCR-2 motif lies at 60 to 62 (HLH). The For DNA cleavage activity role is filled by Tyr100. The short motif at 100–103 (YILK) is the RCR-3 element. Glu104 lines the a divalent metal cation pocket. The tract at residues 175–187 (SANKLFPEIQEEF) is oligomerization. Positions 198 to 202 (LLCNE) match the LXCXE motif, interaction with host RBR1 motif. The interval 245-272 (SHQMKDQESRASTSSAQQEPENLLGPEA) is disordered. Positions 254–264 (RASTSSAQQEP) are enriched in polar residues.

It belongs to the geminiviridae Rep protein family. Homooligomer. Interacts (via LXCXE domain) with host retinoblastoma-related protein 1 (RBR1), and may thereby deregulate the host cell cycle. Part of the C- and V-complexes which are RepA-Rep-DNA complexes involved in the c-sense and v-sense transcription. Mg(2+) serves as cofactor. The cofactor is Mn(2+).

It is found in the host nucleus. The protein resides in the host cytoplasm. Its function is as follows. Implicated in enhancement of V-sense gene expression. Acts a an inhibitor of C-sense gene transcription. The chain is Replication-associated protein A from Maize streak virus genotype A (isolate South Africa) (MSV).